A 324-amino-acid polypeptide reads, in one-letter code: Acetyl-coenzyme A carboxylase carboxyl transferase subunit beta (324 aa).

In terms of domain architecture, CoA carboxyltransferase N-terminal spans L28–P297. 4 residues coordinate Zn(2+): C32, C35, C51, and C54. The C4-type zinc finger occupies C32–C54.

The protein belongs to the AccD/PCCB family. As to quaternary structure, acetyl-CoA carboxylase is a heterohexamer composed of biotin carboxyl carrier protein (AccB), biotin carboxylase (AccC) and two subunits each of ACCase subunit alpha (AccA) and ACCase subunit beta (AccD). Zn(2+) serves as cofactor.

The protein resides in the cytoplasm. It carries out the reaction N(6)-carboxybiotinyl-L-lysyl-[protein] + acetyl-CoA = N(6)-biotinyl-L-lysyl-[protein] + malonyl-CoA. Its pathway is lipid metabolism; malonyl-CoA biosynthesis; malonyl-CoA from acetyl-CoA: step 1/1. Its function is as follows. Component of the acetyl coenzyme A carboxylase (ACC) complex. Biotin carboxylase (BC) catalyzes the carboxylation of biotin on its carrier protein (BCCP) and then the CO(2) group is transferred by the transcarboxylase to acetyl-CoA to form malonyl-CoA. This Methylococcus capsulatus (strain ATCC 33009 / NCIMB 11132 / Bath) protein is Acetyl-coenzyme A carboxylase carboxyl transferase subunit beta.